The primary structure comprises 489 residues: Rhamnulokinase (489 aa).

ATP is bound at residue 13 to 17 (ASSGR). C68 and C222 form a disulfide bridge. Residues G83 and 236-238 (HDT) each bind substrate. D237 functions as the Proton acceptor in the catalytic mechanism. T259 lines the ATP pocket. N296 contributes to the substrate binding site. An ATP-binding site is contributed by Q304. C353 and C370 are disulfide-bonded. Residue G402 participates in ATP binding. C413 and C417 form a disulfide bridge.

Belongs to the rhamnulokinase family. Monomer. It depends on Mg(2+) as a cofactor.

It carries out the reaction L-rhamnulose + ATP = L-rhamnulose 1-phosphate + ADP + H(+). It functions in the pathway carbohydrate degradation; L-rhamnose degradation; glycerone phosphate from L-rhamnose: step 2/3. Its function is as follows. Involved in the catabolism of L-rhamnose (6-deoxy-L-mannose). Catalyzes the transfer of the gamma-phosphate group from ATP to the 1-hydroxyl group of L-rhamnulose to yield L-rhamnulose 1-phosphate. The chain is Rhamnulokinase from Escherichia coli (strain SE11).